The sequence spans 354 residues: Photosystem II protein D1 1 (354 aa).

The next 3 membrane-spanning stretches (helical) occupy residues 29–46, 118–133, and 142–156; these read YIGW…TATT, HFLI…EWEL, and WIAV…AATA. His118 contributes to the chlorophyll a binding site. Residue Tyr126 participates in pheophytin a binding. Asp170 and Glu189 together coordinate [CaMn4O5] cluster. Residues 197-218 traverse the membrane as a helical segment; the sequence is FHQLGVAGVFGGALFSAMHGSL. Chlorophyll a is bound at residue His198. Residues His215 and 264–265 each bind a quinone; that span reads SF. His215 contributes to the Fe cation binding site. His272 is a Fe cation binding site. A helical transmembrane segment spans residues 274–288; sequence FLAAWPVIGIWFTAL. 4 residues coordinate [CaMn4O5] cluster: His332, Glu333, Asp342, and Ala344. The propeptide occupies 345-354; sequence AVEVAPAIRG.

The protein belongs to the reaction center PufL/M/PsbA/D family. In terms of assembly, PSII is composed of 1 copy each of membrane proteins PsbA, PsbB, PsbC, PsbD, PsbE, PsbF, PsbH, PsbI, PsbJ, PsbK, PsbL, PsbM, PsbT, PsbX, PsbY, PsbZ, Psb30/Ycf12, peripheral proteins PsbO, CyanoQ (PsbQ), PsbU, PsbV and a large number of cofactors. It forms dimeric complexes. The D1/D2 heterodimer binds P680, chlorophylls that are the primary electron donor of PSII, and subsequent electron acceptors. It shares a non-heme iron and each subunit binds pheophytin, quinone, additional chlorophylls, carotenoids and lipids. D1 provides most of the ligands for the Mn4-Ca-O5 cluster of the oxygen-evolving complex (OEC). There is also a Cl(-1) ion associated with D1 and D2, which is required for oxygen evolution. The PSII complex binds additional chlorophylls, carotenoids and specific lipids. serves as cofactor. In terms of processing, tyr-161 forms a radical intermediate that is referred to as redox-active TyrZ, YZ or Y-Z. C-terminally processed by CtpA; processing is essential to allow assembly of the oxygen-evolving complex and thus photosynthetic growth.

The protein localises to the cellular thylakoid membrane. It catalyses the reaction 2 a plastoquinone + 4 hnu + 2 H2O = 2 a plastoquinol + O2. In terms of biological role, photosystem II (PSII) is a light-driven water:plastoquinone oxidoreductase that uses light energy to abstract electrons from H(2)O, generating O(2) and a proton gradient subsequently used for ATP formation. It consists of a core antenna complex that captures photons, and an electron transfer chain that converts photonic excitation into a charge separation. The D1/D2 (PsbA/PsbD) reaction center heterodimer binds P680, the primary electron donor of PSII as well as several subsequent electron acceptors. The polypeptide is Photosystem II protein D1 1 (Synechococcus sp. (strain JA-3-3Ab) (Cyanobacteria bacterium Yellowstone A-Prime)).